The sequence spans 1189 residues: Tyrosine-protein phosphatase non-receptor type 14 (1189 aa).

In terms of domain architecture, FERM spans 21-306 (FVTRIRLLDS…TRHKFYKQNK (286 aa)). A phosphoserine mark is found at Ser-314, Ser-461, Ser-486, Ser-591, Ser-593, Ser-594, and Ser-646. Residues 744–775 (ARIPNRPPPEYPGPRKSVSNGALRQDQGTPLP) form a disordered region. Over residues 760–771 (SVSNGALRQDQG) the composition is skewed to polar residues. A Phosphoserine modification is found at Ser-833. The 272-residue stretch at 911-1182 (VFTEYEQIPN…KFVYQVLVQF (272 aa)) folds into the Tyrosine-protein phosphatase domain. Cys-1123 (phosphocysteine intermediate) is an active-site residue. Residues 1123–1129 (CSAGVGR) and Gln-1167 contribute to the substrate site.

The protein belongs to the protein-tyrosine phosphatase family. Non-receptor class subfamily. As to quaternary structure, interacts with FLT4; the interaction is enhanced by stimulation with VEGFC. Interacts (via PPxY motifs) with YAP1 (via WW domains); this interaction leads to the cytoplasmic sequestration of YAP1 and inhibits its transcriptional coactivator activity. Ubiquitinated by the ECS (Elongin BC-CUL2/5-SOCS-box protein)/LRR1 E3 ligase complex and subsequently targeted to proteasomal degradation. As to expression, thymus; in cells of both hematopoietic and non-hematopoietic origins.

It localises to the cytoplasm. The protein localises to the cytoskeleton. It is found in the nucleus. The catalysed reaction is O-phospho-L-tyrosyl-[protein] + H2O = L-tyrosyl-[protein] + phosphate. In terms of biological role, protein tyrosine phosphatase which may play a role in the regulation of lymphangiogenesis, cell-cell adhesion, cell-matrix adhesion, cell migration, cell growth and also regulates TGF-beta gene expression, thereby modulating epithelial-mesenchymal transition. Mediates beta-catenin dephosphorylation at adhesion junctions. Acts as a negative regulator of the oncogenic property of YAP, a downstream target of the hippo pathway, in a cell density-dependent manner. May function as a tumor suppressor. The chain is Tyrosine-protein phosphatase non-receptor type 14 (Ptpn14) from Mus musculus (Mouse).